The primary structure comprises 130 residues: MAEQRFYATGKRKTSIARVWLKPGEGNITVNRRTLDEYFGRETSKMVIRQPLELTDNMGKFDIMVNVCGGGPSGQAGAIKHGITKALLEADPELRGVLKKAGFITRDSRAKERKKYGRKGARARFQFSKR.

Residues 110–130 are disordered; that stretch reads AKERKKYGRKGARARFQFSKR. The segment covering 111–130 has biased composition (basic residues); the sequence is KERKKYGRKGARARFQFSKR.

This sequence belongs to the universal ribosomal protein uS9 family.

In Syntrophotalea carbinolica (strain DSM 2380 / NBRC 103641 / GraBd1) (Pelobacter carbinolicus), this protein is Small ribosomal subunit protein uS9.